We begin with the raw amino-acid sequence, 137 residues long: Cellular retinoic acid-binding protein 1 (137 aa).

Positions 21 to 31 (KALGVNAMLRK) match the Nuclear localization signal motif. 132 to 134 (RIY) contacts all-trans-retinoate.

The protein belongs to the calycin superfamily. Fatty-acid binding protein (FABP) family.

Its subcellular location is the cytoplasm. In terms of biological role, cytosolic CRABPs may regulate the access of retinoic acid to the nuclear retinoic acid receptors. In Mus musculus (Mouse), this protein is Cellular retinoic acid-binding protein 1 (Crabp1).